Consider the following 80-residue polypeptide: Styelin-C (80 aa).

The first 22 residues, 1 to 22, serve as a signal peptide directing secretion; sequence MQMKATILIVLVALFMIQQSEA. Tryptophan 24 carries the post-translational modification 6'-bromotryptophan. Leucine 53 bears the Leucine amide mark. Positions 55–80 are cleaved as a propeptide — removed in mature form; the sequence is DMTDEEFQEFMQDIEQAREEELLSRQ.

It localises to the secreted. Functionally, bactericidal against several Gram-positive and Gram-negative bacteria. This is Styelin-C from Styela clava (Sea squirt).